Consider the following 505-residue polypeptide: Deoxyguanosinetriphosphate triphosphohydrolase (505 aa).

The HD domain maps to 66–273 (RLTHSMEVQQ…MEAADDISYC (208 aa)).

This sequence belongs to the dGTPase family. Type 1 subfamily. Homotetramer. Requires Mg(2+) as cofactor.

The enzyme catalyses dGTP + H2O = 2'-deoxyguanosine + triphosphate + H(+). In terms of biological role, dGTPase preferentially hydrolyzes dGTP over the other canonical NTPs. The protein is Deoxyguanosinetriphosphate triphosphohydrolase of Escherichia coli (strain K12 / MC4100 / BW2952).